Reading from the N-terminus, the 445-residue chain is UPF0210 protein SSU05_0296 (445 aa).

The protein belongs to the UPF0210 family. Homodimer.

The protein is UPF0210 protein SSU05_0296 of Streptococcus suis (strain 05ZYH33).